A 178-amino-acid chain; its full sequence is Matrix-remodeling-associated protein 7 (178 aa).

Residues 7–27 form a helical membrane-spanning segment; sequence LLAALPALVTALALLLAWLLL. Residues 33 to 121 form a disordered region; that stretch reads RVPAPESTAS…AFSFKYSPGQ (89 aa). Residues 48–65 are compositionally biased toward pro residues; that stretch reads APAPPEPPESCAPEPAPE. Over residues 76–85 the composition is skewed to acidic residues; the sequence is PEESEAEEPA. Phosphoserine occurs at positions 79 and 165.

It localises to the membrane. This chain is Matrix-remodeling-associated protein 7 (Mxra7), found in Mus musculus (Mouse).